The chain runs to 901 residues: Viral-enhancing factor (901 aa).

A Peptidase M60 domain is found at 27-330; that stretch reads HRRTEVGVVL…IFTWLYNPQR (304 aa). Residues asparagine 65, asparagine 265, asparagine 339, asparagine 349, asparagine 540, asparagine 594, asparagine 595, asparagine 642, asparagine 683, and asparagine 698 are each glycosylated (N-linked (GlcNAc...) asparagine; by host).

Involved in disruption of the peritrophic membrane and fusion of nucleocapsids with midgut cells. The protein is Viral-enhancing factor (VEF) of Trichoplusia ni (Cabbage looper).